A 491-amino-acid chain; its full sequence is Ribonuclease Y (491 aa).

Residues 4–24 (LIATVGVVAVAALVIAIFVVI) traverse the membrane as a helical segment. In terms of domain architecture, KH spans 181 to 247 (VVSVVHLPGD…RVALERLVDD (67 aa)). One can recognise an HD domain in the interval 307 to 400 (VLKHLVETAH…TQAADAISGG (94 aa)).

Belongs to the RNase Y family.

The protein localises to the cell membrane. Endoribonuclease that initiates mRNA decay. In Acidothermus cellulolyticus (strain ATCC 43068 / DSM 8971 / 11B), this protein is Ribonuclease Y.